We begin with the raw amino-acid sequence, 545 residues long: Membrane protein insertase YidC (545 aa).

The helical transmembrane segment at 8 to 28 (ILLATVLSVGILILWQVIFPK) threads the bilayer. Residues 31 to 69 (PPKPAPTPAAEVAKPAAPAAPAPGAAAPAVPAPPPDAPE) are disordered. The segment covering 38–59 (PAAEVAKPAAPAAPAPGAAAPA) has biased composition (low complexity). Transmembrane regions (helical) follow at residues 325–345 (IDYGAVAKFFALFARGLLYVM), 355–375 (WGVAIILLTVLVRLVLFPLTY), 421–441 (LGGCLPMLLQMPVWFALYAAL), 458–478 (LTAHDPYFILPIAMGISSFVM), and 497–517 (FFPGFFTVIMLFVPGGLTLYI).

This sequence belongs to the OXA1/ALB3/YidC family. Type 1 subfamily. As to quaternary structure, interacts with the Sec translocase complex via SecD. Specifically interacts with transmembrane segments of nascent integral membrane proteins during membrane integration.

The protein localises to the cell inner membrane. Functionally, required for the insertion and/or proper folding and/or complex formation of integral membrane proteins into the membrane. Involved in integration of membrane proteins that insert both dependently and independently of the Sec translocase complex, as well as at least some lipoproteins. Aids folding of multispanning membrane proteins. The polypeptide is Membrane protein insertase YidC (Anaeromyxobacter dehalogenans (strain 2CP-C)).